Here is a 204-residue protein sequence, read N- to C-terminus: Kunitz type trypsin inhibitor 106 (204 aa).

A signal peptide spans 1–26 (MSMRLSIRTLIILAHVCLFITTTTIA). N-linked (GlcNAc...) asparagine glycosylation is present at Asn-62. Residues Cys-65 and Cys-112 are joined by a disulfide bond. N-linked (GlcNAc...) asparagine glycosylation is present at Asn-141. 2 cysteine pairs are disulfide-bonded: Cys-164/Cys-176 and Cys-169/Cys-172.

The protein belongs to the protease inhibitor I3 (leguminous Kunitz-type inhibitor) family. Interacts with SCP1 and CP. Expressed at low levels in non-mycorrhizal roots.

The protein localises to the secreted. Its subcellular location is the extracellular space. The protein resides in the apoplast. Functionally, protease inhibitor that, together with SCP1, controls mycorrhiza establishment and arbuscule development during root colonization by arbuscular mycorrhizal (AM) fungi (e.g. Rhizophagus irregularis), probably by degrading SCP1 in the apoplast of the periarbuscular region. This is Kunitz type trypsin inhibitor 106 from Medicago truncatula (Barrel medic).